Consider the following 325-residue polypeptide: Putative [LysW]-lysine/[LysW]-ornithine hydrolase (325 aa).

H66 contacts Zn(2+). D68 is an active-site residue. D90 serves as a coordination point for Zn(2+). E117 serves as the catalytic Proton acceptor. The Zn(2+) site is built by E118, E139, and H297.

It belongs to the peptidase M20A family. LysK subfamily. It depends on Zn(2+) as a cofactor. Co(2+) is required as a cofactor.

The protein localises to the cytoplasm. The enzyme catalyses [amino-group carrier protein]-C-terminal-gamma-(L-lysyl)-L-glutamate + H2O = [amino-group carrier protein]-C-terminal-L-glutamate + L-lysine. It carries out the reaction [amino-group carrier protein]-C-terminal-gamma-(L-ornithyl)-L-glutamate + H2O = [amino-group carrier protein]-C-terminal-L-glutamate + L-ornithine. It functions in the pathway amino-acid biosynthesis; L-lysine biosynthesis via AAA pathway; L-lysine from L-alpha-aminoadipate (Thermus route): step 5/5. Its pathway is amino-acid biosynthesis; L-arginine biosynthesis. Its function is as follows. Catalyzes the release of L-lysine from [LysW]-gamma-L-lysine and the release of L-ornithine from [LysW]-L-ornithine. This chain is Putative [LysW]-lysine/[LysW]-ornithine hydrolase, found in Pyrococcus horikoshii (strain ATCC 700860 / DSM 12428 / JCM 9974 / NBRC 100139 / OT-3).